A 580-amino-acid chain; its full sequence is Tetratricopeptide repeat protein 39C (580 aa).

3 TPR repeats span residues 312 to 345, 350 to 383, and 482 to 515; these read SLFMFFKGRIQRLECQINSALTSFHTALELAVDQ, HVCLYEIGWCSMIELNFKDAFDSFERLKNESRWS, and GLKHLLLGAIHKCLGNSQDALQFFQRAARDELCR.

Belongs to the TTC39 family.

The polypeptide is Tetratricopeptide repeat protein 39C (Ttc39c) (Mus musculus (Mouse)).